The primary structure comprises 201 residues: Recombination protein RecR (201 aa).

Residues 59 to 74 form a C4-type zinc finger; sequence CEICGNMDTENMCRIC. In terms of domain architecture, Toprim spans 82–177; that stretch reads SIIAIVETVA…KISRLASGIP (96 aa).

Belongs to the RecR family.

May play a role in DNA repair. It seems to be involved in an RecBC-independent recombinational process of DNA repair. It may act with RecF and RecO. The sequence is that of Recombination protein RecR from Rickettsia africae (strain ESF-5).